The sequence spans 325 residues: Quinone oxidoreductase (325 aa).

The protein belongs to the zinc-containing alcohol dehydrogenase family. Quinone oxidoreductase subfamily.

The enzyme catalyses 2 a quinone + NADPH + H(+) = 2 a 1,4-benzosemiquinone + NADP(+). The protein is Quinone oxidoreductase (qor) of Pseudomonas aeruginosa (strain ATCC 15692 / DSM 22644 / CIP 104116 / JCM 14847 / LMG 12228 / 1C / PRS 101 / PAO1).